Here is a 724-residue protein sequence, read N- to C-terminus: Probable zinc transporter MSC2 (724 aa).

The Cytoplasmic segment spans residues 1-6 (MNLQEL). A helical transmembrane segment spans residues 7-27 (LAKVPLLLSYPTIILSSNLIV). Residues 28 to 58 (PSHNDLISRAASTSAAEYADEKLIFFSTDHA) are Lumenal-facing. The helical transmembrane segment at 59–79 (IRLIFLPTFVASSFNLFAHYF) threads the bilayer. Over 80 to 90 (NFINYSSRRKY) the chain is Cytoplasmic. A helical membrane pass occupies residues 91–111 (YVLFTAIYFLSILTAIFHPIQ). At 112–134 (STCITLLIIKLLTTADESSPKIA) the chain is on the lumenal side. Residues 135 to 155 (LNFKTILKTFVPFITLTLVIL) traverse the membrane as a helical segment. At 156–174 (RWDPSFDASSGDVNKISTS) the chain is on the cytoplasmic side. A helical transmembrane segment spans residues 175–195 (LAAYALLILTLRYASPLILST). Residues 196-219 (LSSSIGVVSKDTSVAQHSISRNKR) are Lumenal-facing. The chain crosses the membrane as a helical span at residues 220-240 (FPLILVLPIFSFVLLYLMTIV). At 241–244 (NKTY) the chain is on the cytoplasmic side. The helical transmembrane segment at 245-265 (NIQLLMVFVFFGCLSIFFLSL) threads the bilayer. The Lumenal segment spans residues 266–298 (KDLFTEDGNQKKGGQEDEYCRMFDIKYMISYLW). Residues 299 to 319 (LTRFTILLTGIMAIVVHFLSF) traverse the membrane as a helical segment. Residues 320-386 (NEITSSIKTD…KQMALNKDTR (67 aa)) lie on the Cytoplasmic side of the membrane. A helical transmembrane segment spans residues 387 to 407 (SIFSFLLLNTAFMFVQLLYSF). At 408–417 (RSKSLGLLSD) the chain is on the lumenal side. Residues 418-438 (SLHMALDCTSLLLGLIAGVLT) traverse the membrane as a helical segment. Topologically, residues 439–453 (KKPASDKFPFGLNYL) are cytoplasmic. A helical membrane pass occupies residues 454–474 (GTLAGFTNGVLLLGIVCGIFV). Residues 475–491 (EAIERIFNPIHLHATNE) lie on the Lumenal side of the membrane. The chain crosses the membrane as a helical span at residues 492 to 512 (LLVVATLGLLVNLVGLFAFDH). Topologically, residues 513–528 (GAHDHGGTDNENMKGI) are cytoplasmic. Residues 529-549 (FLHILADTLGSVGVVISTLLI) traverse the membrane as a helical segment. Over 550 to 563 (KLTHWPIFDPIASL) the chain is Lumenal. The chain crosses the membrane as a helical span at residues 564–584 (LIGSLILLSALPLLKSTSANI). Residues 585–724 (LLRLDDKKHN…NSLPLQPIAN (140 aa)) are Cytoplasmic-facing. The tract at residues 614 to 653 (TPRFWPTESGSSGHSHAHTHSHAENHSHEHHHDQKNGSQE) is disordered. The span at 634–648 (SHAENHSHEHHHDQK) shows a compositional bias: basic and acidic residues.

Belongs to the cation diffusion facilitator (CDF) transporter (TC 2.A.4) family. SLC30A subfamily.

Its subcellular location is the endoplasmic reticulum membrane. The protein localises to the nucleus membrane. Its function is as follows. Probably act as a zinc ion transporter moving zinc from the nucleus/endoplasmic reticulum to the cytoplasm. Involved in zinc ion homeostasis and cellular distribution. This chain is Probable zinc transporter MSC2 (MSC2), found in Saccharomyces cerevisiae (strain ATCC 204508 / S288c) (Baker's yeast).